A 216-amino-acid chain; its full sequence is Large ribosomal subunit protein uL3 (216 aa).

Residues 119 to 143 (GYQGNIHKDGQSRGPMAHGSRYHRR) form a disordered region.

Belongs to the universal ribosomal protein uL3 family. In terms of assembly, part of the 50S ribosomal subunit. Forms a cluster with proteins L14 and L19.

One of the primary rRNA binding proteins, it binds directly near the 3'-end of the 23S rRNA, where it nucleates assembly of the 50S subunit. The polypeptide is Large ribosomal subunit protein uL3 (Levilactobacillus brevis (strain ATCC 367 / BCRC 12310 / CIP 105137 / JCM 1170 / LMG 11437 / NCIMB 947 / NCTC 947) (Lactobacillus brevis)).